Here is a 277-residue protein sequence, read N- to C-terminus: Protein CUSTOS (277 aa).

Disordered regions lie at residues 1–81, 108–182, and 238–277; these read MVAP…QTTP, TQQA…QRCR, and SVNGDPVLSGTKKKKKKKAKKAREASLCPPAECAAAEPKN. Over residues 9-18 the composition is skewed to low complexity; that stretch reads SDSESSSSDS. Phosphoserine is present on Ser-62. Residues 63-72 are compositionally biased toward basic and acidic residues; that stretch reads RRREVNQHDE. Thr-80 carries the post-translational modification Phosphothreonine. A coiled-coil region spans residues 106–141; the sequence is KKTQQARLQQEAKEQQEAKEQQAAKEEQAAKKEEDG. Basic and acidic residues predominate over residues 115–142; it reads QEAKEQQEAKEQQAAKEEQAAKKEEDGF. Ser-158 and Ser-238 each carry phosphoserine. Over residues 248 to 258 the composition is skewed to basic residues; it reads TKKKKKKKAKK. The Nucleolar localization signal (NLS) signature appears at 249-256; it reads KKKKKKKA. The segment covering 265 to 277 has biased composition (low complexity); it reads CPPAECAAAEPKN.

Belongs to the CUSTOS family.

It is found in the nucleus envelope. Plays a role in the regulation of Wnt signaling pathway during early development. The polypeptide is Protein CUSTOS (Rattus norvegicus (Rat)).